The following is a 54-amino-acid chain: Ovomucoid (54 aa).

Residues 4 to 54 (VDCSDYPRPVCTLDYMPLCGSDNKTYSNKCNFCNAVVDSNGTITLSHFGRC) enclose the Kazal-like domain. 3 cysteine pairs are disulfide-bonded: C6–C36, C14–C33, and C22–C54. Residue N43 is glycosylated (N-linked (GlcNAc...) asparagine).

It localises to the secreted. The protein is Ovomucoid of Corvus albus (Pied crow).